Reading from the N-terminus, the 315-residue chain is Olfactory receptor 10A4 (315 aa).

Residues M1–A26 lie on the Extracellular side of the membrane. A glycan (N-linked (GlcNAc...) asparagine) is linked at N5. Residues L27 to I47 traverse the membrane as a helical segment. At L48–A55 the chain is on the cytoplasmic side. Residues L56–L76 traverse the membrane as a helical segment. Residues V77–T100 lie on the Extracellular side of the membrane. Residues C98 and C190 are joined by a disulfide bond. Residues Q101–Y121 traverse the membrane as a helical segment. The Cytoplasmic portion of the chain corresponds to D122–I140. Residues S141 to T161 form a helical membrane-spanning segment. The Extracellular portion of the chain corresponds to T162–L198. A helical membrane pass occupies residues E199–S218. Topologically, residues Y219 to A238 are cytoplasmic. Residues F239–T259 form a helical membrane-spanning segment. The Extracellular portion of the chain corresponds to Y260–K272. The chain crosses the membrane as a helical span at residues K273–S293. At R294–L315 the chain is on the cytoplasmic side.

This sequence belongs to the G-protein coupled receptor 1 family. In terms of tissue distribution, expressed in the tongue.

It localises to the cell membrane. Its function is as follows. Odorant receptor (Potential). May be involved in taste perception. The protein is Olfactory receptor 10A4 (OR10A4) of Homo sapiens (Human).